A 448-amino-acid polypeptide reads, in one-letter code: 3-phosphoshikimate 1-carboxyvinyltransferase (448 aa).

3-phosphoshikimate contacts are provided by lysine 28, serine 29, and arginine 33. Position 28 (lysine 28) interacts with phosphoenolpyruvate. Residues glycine 100 and arginine 128 each contribute to the phosphoenolpyruvate site. Positions 173, 175, 326, and 353 each coordinate 3-phosphoshikimate. Glutamine 175 contributes to the phosphoenolpyruvate binding site. The active-site Proton acceptor is the aspartate 326. Phosphoenolpyruvate is bound by residues arginine 357 and arginine 405.

It belongs to the EPSP synthase family. In terms of assembly, monomer.

Its subcellular location is the cytoplasm. It carries out the reaction 3-phosphoshikimate + phosphoenolpyruvate = 5-O-(1-carboxyvinyl)-3-phosphoshikimate + phosphate. It functions in the pathway metabolic intermediate biosynthesis; chorismate biosynthesis; chorismate from D-erythrose 4-phosphate and phosphoenolpyruvate: step 6/7. Its function is as follows. Catalyzes the transfer of the enolpyruvyl moiety of phosphoenolpyruvate (PEP) to the 5-hydroxyl of shikimate-3-phosphate (S3P) to produce enolpyruvyl shikimate-3-phosphate and inorganic phosphate. This Sinorhizobium fredii (strain NBRC 101917 / NGR234) protein is 3-phosphoshikimate 1-carboxyvinyltransferase.